The chain runs to 376 residues: Alpha-ketoglutarate-dependent dioxygenase esdpJ (376 aa).

Fe cation is bound by residues His-145 and Asp-147. Thr-202 is a binding site for 2-oxoglutarate. Positions Tyr-234 to Leu-260 are disordered. The span at Gln-239 to Pro-249 shows a compositional bias: basic and acidic residues. His-335 contacts Fe cation. Residues Arg-347 and Arg-351 each contribute to the 2-oxoglutarate site. The disordered stretch occupies residues Gly-354 to Asn-376. A compositionally biased stretch (basic and acidic residues) spans Pro-363–Asn-376.

The protein belongs to the TfdA dioxygenase family. Fe(2+) is required as a cofactor.

In terms of biological role, alpha-ketoglutarate-dependent dioxygenas; part of the cluster that mediates the biosynthesis of shearones, diterpenoid pyrones (DPs) which are structurally diverse meroterpenoids consisting of a diterpene linked by a pyrone, and which may exhibit a range of bioactivities. The alpha-ketoglutarate-dependent dioxygenase esdpJ seems not to be involved in this pathway. The molecular scaffold is commonly biosynthesized by a series of enzymes including the non-reducing polyketide synthase (NR-PKS) esdpA that generates an alpha-pyrone; the prenyltransferase esdpC that attaches a geranylgeranyl pyrophosphate (GGPP) produced by the GGPP synthase (GGPPS) esdpD onto the pyrone unit; the FAD-dependent monooxygenase esdpE that converts an olefin on the diterpene unit into an epoxide; and the terpene cyclase esdpB that catalyzes the cyclization reactions to give the molecular backbone shearone A. In the modification steps, esdpF oxidizes the hydroxy group to a ketone at C-3 and esdpG then attaches hydroxy groups at both C-11 and C-12. After that, esdpI hydroxylates at C-20 and esdpH hydroxylates at C-6'. The ether bridge is generated by nucleophilic attack of the hydroxy group at C-20 to the carbonyl carbon at C-3. EsdpH can also functions prior to esdpI. The different combinations of these modification enzymes lead to the production of diverse shearone derivatives, shearone I being the end product of the pathway. This chain is Alpha-ketoglutarate-dependent dioxygenase esdpJ, found in Penicillium shearii (Eupenicillium shearii).